Here is a 184-residue protein sequence, read N- to C-terminus: Cytidylate kinase (184 aa).

8–16 provides a ligand contact to ATP; that stretch reads GQPGSGKTT.

Belongs to the cytidylate kinase family. Type 2 subfamily.

The protein localises to the cytoplasm. It carries out the reaction CMP + ATP = CDP + ADP. The catalysed reaction is dCMP + ATP = dCDP + ADP. The polypeptide is Cytidylate kinase (Pyrobaculum aerophilum (strain ATCC 51768 / DSM 7523 / JCM 9630 / CIP 104966 / NBRC 100827 / IM2)).